We begin with the raw amino-acid sequence, 298 residues long: Elongation factor Ts (298 aa).

The interval 80–83 (TDFV) is involved in Mg(2+) ion dislocation from EF-Tu.

This sequence belongs to the EF-Ts family.

The protein localises to the cytoplasm. In terms of biological role, associates with the EF-Tu.GDP complex and induces the exchange of GDP to GTP. It remains bound to the aminoacyl-tRNA.EF-Tu.GTP complex up to the GTP hydrolysis stage on the ribosome. The protein is Elongation factor Ts of Acidovorax sp. (strain JS42).